A 691-amino-acid polypeptide reads, in one-letter code: Elongation factor G (691 aa).

The 275-residue stretch at 8 to 282 (ERVRNIGIAA…AVVDYLPAPV (275 aa)) folds into the tr-type G domain. GTP-binding positions include 17 to 24 (AHIDAGKT), 81 to 85 (DTPGH), and 135 to 138 (NKMD).

Belongs to the TRAFAC class translation factor GTPase superfamily. Classic translation factor GTPase family. EF-G/EF-2 subfamily.

It localises to the cytoplasm. Functionally, catalyzes the GTP-dependent ribosomal translocation step during translation elongation. During this step, the ribosome changes from the pre-translocational (PRE) to the post-translocational (POST) state as the newly formed A-site-bound peptidyl-tRNA and P-site-bound deacylated tRNA move to the P and E sites, respectively. Catalyzes the coordinated movement of the two tRNA molecules, the mRNA and conformational changes in the ribosome. The polypeptide is Elongation factor G (Prochlorococcus marinus (strain MIT 9515)).